We begin with the raw amino-acid sequence, 221 residues long: Enolase-phosphatase E1 (221 aa).

The protein belongs to the HAD-like hydrolase superfamily. MasA/MtnC family. Monomer. Requires Mg(2+) as cofactor.

It catalyses the reaction 5-methylsulfanyl-2,3-dioxopentyl phosphate + H2O = 1,2-dihydroxy-5-(methylsulfanyl)pent-1-en-3-one + phosphate. The protein operates within amino-acid biosynthesis; L-methionine biosynthesis via salvage pathway; L-methionine from S-methyl-5-thio-alpha-D-ribose 1-phosphate: step 3/6. It participates in amino-acid biosynthesis; L-methionine biosynthesis via salvage pathway; L-methionine from S-methyl-5-thio-alpha-D-ribose 1-phosphate: step 4/6. Its function is as follows. Bifunctional enzyme that catalyzes the enolization of 2,3-diketo-5-methylthiopentyl-1-phosphate (DK-MTP-1-P) into the intermediate 2-hydroxy-3-keto-5-methylthiopentenyl-1-phosphate (HK-MTPenyl-1-P), which is then dephosphorylated to form the acireductone 1,2-dihydroxy-3-keto-5-methylthiopentene (DHK-MTPene). The protein is Enolase-phosphatase E1 of Hydrogenobaculum sp. (strain Y04AAS1).